The chain runs to 370 residues: Cobalt-precorrin-5B C(1)-methyltransferase (370 aa).

This sequence belongs to the CbiD family.

The catalysed reaction is Co-precorrin-5B + S-adenosyl-L-methionine = Co-precorrin-6A + S-adenosyl-L-homocysteine. Its pathway is cofactor biosynthesis; adenosylcobalamin biosynthesis; cob(II)yrinate a,c-diamide from sirohydrochlorin (anaerobic route): step 6/10. Functionally, catalyzes the methylation of C-1 in cobalt-precorrin-5B to form cobalt-precorrin-6A. This Pseudomonas savastanoi pv. phaseolicola (strain 1448A / Race 6) (Pseudomonas syringae pv. phaseolicola (strain 1448A / Race 6)) protein is Cobalt-precorrin-5B C(1)-methyltransferase.